The chain runs to 524 residues: Thioredoxin reductase 2, mitochondrial (524 aa).

A mitochondrion-targeting transit peptide spans 1 to 34; the sequence is MVAAMVAALRGPSRRFRPRTRALTRGTRGAASAA. 41 to 70 is a binding site for FAD; sequence DLLVIGGGSGGLACAKEAAQLGKKVAVADY. The residue at position 79 (Lys-79) is an N6-succinyllysine. Cys-86 and Cys-91 are oxidised to a cystine. Lys-175 and Lys-329 each carry N6-succinyllysine. His-497 acts as the Proton acceptor in catalysis. The cysteinyl-selenocysteine (Cys-Sec) cross-link spans 522–523; sequence CU. Position 523 (Sec-523) is a non-standard amino acid, selenocysteine.

This sequence belongs to the class-I pyridine nucleotide-disulfide oxidoreductase family. Homodimer. Requires FAD as cofactor. In terms of tissue distribution, expressed in liver, heart, testis and kidney.

Its subcellular location is the mitochondrion. It catalyses the reaction [thioredoxin]-dithiol + NADP(+) = [thioredoxin]-disulfide + NADPH + H(+). Involved in the control of reactive oxygen species levels and the regulation of mitochondrial redox homeostasis. Maintains thioredoxin in a reduced state. May play a role in redox-regulated cell signaling. The chain is Thioredoxin reductase 2, mitochondrial from Mus musculus (Mouse).